A 317-amino-acid polypeptide reads, in one-letter code: mRNA 3'-end-processing protein yth-1 (317 aa).

Residues 1–20 (MATTTQTTTNSLPSGAGGPQ) form a disordered region. 5 C3H1-type zinc fingers span residues 51–78 (PADR…HVTA), 93–120 (GFGS…HEYN), 121–149 (LRKM…HIDP), 150–177 (LSRL…HFRR), and 179–202 (LCLY…HPRW). The segment covering 202-217 (WTADKDMEKPRAKGEG) has biased composition (basic and acidic residues). The disordered stretch occupies residues 202-317 (WTADKDMEKP…GRGGFRGKGH (116 aa)). Low complexity predominate over residues 223–237 (QQQQQQQQQQHMGDA). Positions 253–288 (YMDRERERDRDNREREMMMQGRDRDGGGHDRHKDRF) are enriched in basic and acidic residues. Positions 289-301 (GGGGGGGGGGRGR) are enriched in gly residues. A compositionally biased stretch (basic residues) spans 302-317 (GGWRGRGRGGFRGKGH).

The protein belongs to the CPSF4/YTH1 family.

The protein resides in the nucleus. Its function is as follows. Component of the cleavage factor I (CF I) involved in pre-mRNA 3'-end processing. The protein is mRNA 3'-end-processing protein yth-1 (yth-1) of Neurospora crassa (strain ATCC 24698 / 74-OR23-1A / CBS 708.71 / DSM 1257 / FGSC 987).